Reading from the N-terminus, the 354-residue chain is Uroporphyrinogen decarboxylase (354 aa).

Substrate-binding positions include 27–31, aspartate 77, tyrosine 154, threonine 209, and histidine 327; that span reads RQAGR.

This sequence belongs to the uroporphyrinogen decarboxylase family. Homodimer.

The protein localises to the cytoplasm. The catalysed reaction is uroporphyrinogen III + 4 H(+) = coproporphyrinogen III + 4 CO2. It functions in the pathway porphyrin-containing compound metabolism; protoporphyrin-IX biosynthesis; coproporphyrinogen-III from 5-aminolevulinate: step 4/4. Catalyzes the decarboxylation of four acetate groups of uroporphyrinogen-III to yield coproporphyrinogen-III. The chain is Uroporphyrinogen decarboxylase from Escherichia fergusonii (strain ATCC 35469 / DSM 13698 / CCUG 18766 / IAM 14443 / JCM 21226 / LMG 7866 / NBRC 102419 / NCTC 12128 / CDC 0568-73).